The primary structure comprises 321 residues: Lipoyl synthase (321 aa).

[4Fe-4S] cluster is bound by residues Cys68, Cys73, Cys79, Cys94, Cys98, Cys101, and Ser308. A Radical SAM core domain is found at 80 to 297; that stretch reads FNHGTATFMI…KEIALELGFT (218 aa).

It belongs to the radical SAM superfamily. Lipoyl synthase family. [4Fe-4S] cluster serves as cofactor.

The protein localises to the cytoplasm. It catalyses the reaction [[Fe-S] cluster scaffold protein carrying a second [4Fe-4S](2+) cluster] + N(6)-octanoyl-L-lysyl-[protein] + 2 oxidized [2Fe-2S]-[ferredoxin] + 2 S-adenosyl-L-methionine + 4 H(+) = [[Fe-S] cluster scaffold protein] + N(6)-[(R)-dihydrolipoyl]-L-lysyl-[protein] + 4 Fe(3+) + 2 hydrogen sulfide + 2 5'-deoxyadenosine + 2 L-methionine + 2 reduced [2Fe-2S]-[ferredoxin]. Its pathway is protein modification; protein lipoylation via endogenous pathway; protein N(6)-(lipoyl)lysine from octanoyl-[acyl-carrier-protein]: step 2/2. Its function is as follows. Catalyzes the radical-mediated insertion of two sulfur atoms into the C-6 and C-8 positions of the octanoyl moiety bound to the lipoyl domains of lipoate-dependent enzymes, thereby converting the octanoylated domains into lipoylated derivatives. The protein is Lipoyl synthase of Vibrio campbellii (strain ATCC BAA-1116).